A 437-amino-acid chain; its full sequence is Putative ABC transporter ATP-binding protein CTC_00753 (437 aa).

ABC transporter domains lie at 1–143 (MERE…LPTI) and 179–416 (LKFK…QISK). 219 to 226 (GENGAGKS) contacts ATP.

This sequence belongs to the ABC transporter superfamily.

It localises to the cell membrane. Probably part of an ABC transporter complex. Responsible for energy coupling to the transport system. The polypeptide is Putative ABC transporter ATP-binding protein CTC_00753 (Clostridium tetani (strain Massachusetts / E88)).